The chain runs to 32 residues: Potassium channel toxin alpha-KTx 10.6 (32 aa).

3 cysteine pairs are disulfide-bonded: Cys3-Cys22, Cys8-Cys27, and Cys12-Cys29.

In terms of tissue distribution, expressed by the venom gland.

It is found in the secreted. Its function is as follows. Blocks human voltage-gated potassium (Kv) channels Kv1.2/KCNA2 and Kv1.3/KCNA3. Does not block human Kv1.1 at 100nM concentration. This is Potassium channel toxin alpha-KTx 10.6 from Centruroides bonito (Scorpion).